A 697-amino-acid polypeptide reads, in one-letter code: Putative flagellar export/assembly protein LfhA (697 aa).

A run of 7 helical transmembrane segments spans residues 19 to 39, 40 to 60, 66 to 86, 116 to 136, 204 to 224, 242 to 262, and 280 to 302; these read VPLV…PALL, DILF…AVSA, FSLF…LNVA, GNFV…FIVV, AIAG…IGIF, IGDG…AAII, and LLAS…VVPG.

The protein belongs to the FHIPEP (flagella/HR/invasion proteins export pore) family.

The protein localises to the cell inner membrane. Its function is as follows. Part of the flagellar gene cluster Flag-2. However, the Flag-2 flagellar system could be inactive in strain 042 due to a frameshift in lfgC. The chain is Putative flagellar export/assembly protein LfhA from Escherichia coli O44:H18 (strain 042 / EAEC).